The chain runs to 184 residues: MKNVIDPFISLSYWPSAGGFGSNTNILETNIINPSVVLSVLIYFGKGVLSNLLDNRKQKILNTIRNSEELCKGAIDQLEKARARLREVEMIGDEIRVNGDSQVEREKEDLINAASENLEQLEDPKNETIYSEQQRAIDQIRQQVSRQALRRTIGTLNSRFKIELHLRTINQNIGLFRTMMNTPD.

A helical membrane pass occupies residues 31–49 (IINPSVVLSVLIYFGKGVL).

The protein belongs to the ATPase B chain family. As to quaternary structure, F-type ATPases have 2 components, F(1) - the catalytic core - and F(0) - the membrane proton channel. F(1) has five subunits: alpha(3), beta(3), gamma(1), delta(1), epsilon(1). F(0) has four main subunits: a(1), b(1), b'(1) and c(10-14). The alpha and beta chains form an alternating ring which encloses part of the gamma chain. F(1) is attached to F(0) by a central stalk formed by the gamma and epsilon chains, while a peripheral stalk is formed by the delta, b and b' chains.

It is found in the plastid. Its subcellular location is the chloroplast thylakoid membrane. In terms of biological role, f(1)F(0) ATP synthase produces ATP from ADP in the presence of a proton or sodium gradient. F-type ATPases consist of two structural domains, F(1) containing the extramembraneous catalytic core and F(0) containing the membrane proton channel, linked together by a central stalk and a peripheral stalk. During catalysis, ATP synthesis in the catalytic domain of F(1) is coupled via a rotary mechanism of the central stalk subunits to proton translocation. Functionally, component of the F(0) channel, it forms part of the peripheral stalk, linking F(1) to F(0). In Pinus koraiensis (Korean pine), this protein is ATP synthase subunit b, chloroplastic.